Reading from the N-terminus, the 300-residue chain is MKKEHIFWTSICLLLGLVPAPVSSAAEEDEEFTNITDIKPPLQKPTHSFCAMKVDDGPCRAYIKRFFFNILTHQCEEFIYGGCEGNENRFESLEECKEKCARDYPKMTTKLTFQKGKPDFCFLEEDPGICRGYITRYFYNNQSKQCERFKYGGCLGNLNNFESLEECKNTCENPTSDFQVDDHRTQLNTVNNTLINQPTKAPRRWAFHGPSWCLPPADRGLCQANEIRFFYNAIIGKCRPFKYSGCGGNENNFTSKKACITACKKGFIPKSIKGGLIKTKRKKKKQPVKITYVETFVKKT.

An N-terminal signal peptide occupies residues 1–24 (MKKEHIFWTSICLLLGLVPAPVSS). 2 consecutive BPTI/Kunitz inhibitor domains span residues 50-100 (CAMK…KEKC) and 121-171 (CFLE…KNTC). 6 disulfides stabilise this stretch: Cys50-Cys100, Cys59-Cys83, Cys75-Cys96, Cys121-Cys171, Cys130-Cys154, and Cys146-Cys167. N-linked (GlcNAc...) asparagine glycosylation is present at Asn141. Residue Asn191 is glycosylated (N-linked (GlcNAc...) asparagine). The region spanning 213-263 (CLPPADRGLCQANEIRFFYNAIIGKCRPFKYSGCGGNENNFTSKKACITAC) is the BPTI/Kunitz inhibitor 3 domain. 3 cysteine pairs are disulfide-bonded: Cys213-Cys263, Cys222-Cys246, and Cys238-Cys259. Asn252 carries an N-linked (GlcNAc...) asparagine glycan.

The protein resides in the secreted. Functionally, inhibits factor X (X(a)) directly and, in a Xa-dependent way, inhibits VIIa/tissue factor activity, presumably by forming a quaternary Xa/LACI/VIIa/TF complex. It possesses an antithrombotic action and also the ability to associate with lipoproteins in plasma. This Oryctolagus cuniculus (Rabbit) protein is Tissue factor pathway inhibitor (TFPI).